Reading from the N-terminus, the 354-residue chain is Macrosialin (354 aa).

Positions 1–21 (MRLAVLFSGALLGLLAAQGTG) are cleaved as a signal peptide. Residues 22-319 (NDCPHKKSAT…QSFSCPSDRS (298 aa)) lie on the Extracellular side of the membrane. Positions 23 to 140 (DCPHKKSATL…SPGFTSSAHP (118 aa)) are mucin-like. Over residues 40–51 (PTVTESTGTTSH) the composition is skewed to low complexity. Residues 40 to 162 (PTVTESTGTT…SKETIGDYTW (123 aa)) form a disordered region. A compositionally biased stretch (basic residues) spans 52-61 (RTTKSHKTTT). Residues 62 to 84 (HRTTTTGTTSHGPTTATHNPTTT) are compositionally biased toward low complexity. 2 tandem repeats follow at residues 70 to 99 (TSHGPTTATHNPTTTSHGNVTVHPTSNSTA) and 100 to 129 (TSQGPSTATHSPATTSHGNATVHPTSNSTA). A 2 X 30 AA tandem repeats region spans residues 70 to 129 (TSHGPTTATHNPTTTSHGNVTVHPTSNSTATSQGPSTATHSPATTSHGNATVHPTSNSTA). Over residues 85–102 (SHGNVTVHPTSNSTATSQ) the composition is skewed to polar residues. 2 N-linked (GlcNAc...) asparagine glycosylation sites follow: N88 and N96. Over residues 103–117 (GPSTATHSPATTSHG) the composition is skewed to low complexity. 2 N-linked (GlcNAc...) asparagine glycosylation sites follow: N118 and N126. The segment covering 121 to 135 (VHPTSNSTATSPGFT) has biased composition (polar residues). The span at 140-150 (PEPPPPSPSPS) shows a compositional bias: pro residues. N-linked (GlcNAc...) asparagine glycans are attached at residues N164, N199, N246, N261, and N279. A disulfide bridge links C169 with C207. C277 and C314 are disulfide-bonded. A helical membrane pass occupies residues 320–344 (ILLPLIIGLILLGLLALVLIAFCII). Residues 345 to 354 (RRRPSAYQAL) lie on the Cytoplasmic side of the membrane.

It belongs to the LAMP family. Post-translationally, N- and O-glycosylated. As to expression, highly expressed by blood monocytes and tissue macrophages. Also expressed in lymphocytes, fibroblasts and endothelial cells. Expressed in many tumor cell lines which could allow them to attach to selectins on vascular endothelium, facilitating their dissemination to secondary sites.

It localises to the cell membrane. The protein localises to the endosome membrane. Its subcellular location is the lysosome membrane. Functionally, could play a role in phagocytic activities of tissue macrophages, both in intracellular lysosomal metabolism and extracellular cell-cell and cell-pathogen interactions. Binds to tissue- and organ-specific lectins or selectins, allowing homing of macrophage subsets to particular sites. Rapid recirculation of CD68 from endosomes and lysosomes to the plasma membrane may allow macrophages to crawl over selectin-bearing substrates or other cells. This Homo sapiens (Human) protein is Macrosialin (CD68).